The following is a 592-amino-acid chain: Bifunctional purine biosynthesis protein ADE17 (592 aa).

Residues 1–147 (MANYTKTAIL…KNHARVTILS (147 aa)) enclose the MGS-like domain. Residues 35–38 (SGGT), 65–68 (RVKT), 102–103 (CN), and 126–127 (DI) contribute to the IMP site. K138 functions as the Proton donor/acceptor; for FAICAR cyclization activity in the catalytic mechanism. Residues 206 to 207 (RY), H267, G315, D338, N430, and R450 each bind 5-amino-1-(5-phospho-beta-D-ribosyl)imidazole-4-carboxamide. H267 (proton acceptor; for AICAR formyltransferase activity) is an active-site residue. I451 provides a ligand contact to (6R)-10-formyltetrahydrofolate. F541 contributes to the 5-amino-1-(5-phospho-beta-D-ribosyl)imidazole-4-carboxamide binding site. (6R)-10-formyltetrahydrofolate-binding positions include D546 and 565–566 (SV). R588 provides a ligand contact to 5-amino-1-(5-phospho-beta-D-ribosyl)imidazole-4-carboxamide.

It belongs to the PurH family. Homodimer.

The protein localises to the cytoplasm. It localises to the cytosol. The enzyme catalyses (6R)-10-formyltetrahydrofolate + 5-amino-1-(5-phospho-beta-D-ribosyl)imidazole-4-carboxamide = 5-formamido-1-(5-phospho-D-ribosyl)imidazole-4-carboxamide + (6S)-5,6,7,8-tetrahydrofolate. It catalyses the reaction IMP + H2O = 5-formamido-1-(5-phospho-D-ribosyl)imidazole-4-carboxamide. The protein operates within purine metabolism; IMP biosynthesis via de novo pathway; 5-formamido-1-(5-phospho-D-ribosyl)imidazole-4-carboxamide from 5-amino-1-(5-phospho-D-ribosyl)imidazole-4-carboxamide (10-formyl THF route): step 1/1. Its pathway is purine metabolism; IMP biosynthesis via de novo pathway; IMP from 5-formamido-1-(5-phospho-D-ribosyl)imidazole-4-carboxamide: step 1/1. Bifunctional enzyme that catalyzes the last two steps of purine biosynthesis. Acts as a transformylase that incorporates a formyl group to the AMP analog AICAR (5-amino-1-(5-phospho-beta-D-ribosyl)imidazole-4-carboxamide) to produce the intermediate formyl-AICAR (FAICAR). Also catalyzes the cyclization of FAICAR to IMP. This chain is Bifunctional purine biosynthesis protein ADE17, found in Saccharomyces cerevisiae (strain ATCC 204508 / S288c) (Baker's yeast).